We begin with the raw amino-acid sequence, 43 residues long: Protein PsbN 2 (43 aa).

Residues 4–24 (ATILGISIAAALVGITVLALY) traverse the membrane as a helical segment.

This sequence belongs to the PsbN family.

Its subcellular location is the cellular thylakoid membrane. Its function is as follows. May play a role in photosystem I and II biogenesis. This chain is Protein PsbN 2, found in Microcystis aeruginosa (strain NIES-843 / IAM M-2473).